Here is a 128-residue protein sequence, read N- to C-terminus: Sm-like protein LSM1A (128 aa).

A Sm domain is found at 10–85; the sequence is FFSTSLAAYL…VVLIGELDVE (76 aa).

This sequence belongs to the snRNP Sm proteins family. As to quaternary structure, component of the heptameric LSM1-LSM7 complex that forms a seven-membered ring structure with a donut shape. The LSM subunits are arranged in the order LSM1, LSM2, LSM3, LSM6, LSM5, LSM7 and LSM4. LSM1A subunit interacts only with its two neighboring subunits, LSM2 and LSM4. In terms of tissue distribution, expressed in roots, leaves, stems, flowers and siliques.

Its subcellular location is the cytoplasm. It localises to the P-body. In terms of biological role, component of the cytoplasmic LSM1-LSM7 complex which is involved in mRNA degradation by promoting decapping and leading to accurate 5'-3' mRNA decay. LSM1A and LSM1B are essential for the formation of the cytoplasmic LSM1-LSM7 complex which regulates developmental gene expression by the decapping of specific development-related transcripts. Required for P-body formation during heat stress. This chain is Sm-like protein LSM1A, found in Arabidopsis thaliana (Mouse-ear cress).